A 194-amino-acid polypeptide reads, in one-letter code: Large ribosomal subunit protein uL6m (194 aa).

The protein belongs to the universal ribosomal protein uL6 family.

The protein localises to the mitochondrion. This is Large ribosomal subunit protein uL6m (RPL6) from Prototheca wickerhamii.